Reading from the N-terminus, the 201-residue chain is Proteasome subunit beta 1 (201 aa).

The propeptide at 1–10 (MNGSPSAMKG) is removed in mature form; by autocatalysis. Threonine 11 serves as the catalytic Nucleophile.

Belongs to the peptidase T1B family. The 20S proteasome core is composed of 14 alpha and 14 beta subunits that assemble into four stacked heptameric rings, resulting in a barrel-shaped structure. The two inner rings, each composed of seven catalytic beta subunits, are sandwiched by two outer rings, each composed of seven alpha subunits. The catalytic chamber with the active sites is on the inside of the barrel. Has a gated structure, the ends of the cylinder being occluded by the N-termini of the alpha-subunits. Is capped at one or both ends by the proteasome regulatory ATPase, PAN.

It localises to the cytoplasm. It carries out the reaction Cleavage of peptide bonds with very broad specificity.. Its activity is regulated as follows. The formation of the proteasomal ATPase PAN-20S proteasome complex, via the docking of the C-termini of PAN into the intersubunit pockets in the alpha-rings, triggers opening of the gate for substrate entry. Interconversion between the open-gate and close-gate conformations leads to a dynamic regulation of the 20S proteasome proteolysis activity. Component of the proteasome core, a large protease complex with broad specificity involved in protein degradation. The polypeptide is Proteasome subunit beta 1 (Thermococcus gammatolerans (strain DSM 15229 / JCM 11827 / EJ3)).